The following is a 156-amino-acid chain: Small ribosomal subunit protein bS16 (156 aa).

Composition is skewed to low complexity over residues Ala-113–Thr-123 and Glu-137–Ser-156. Positions Ala-113–Ser-156 are disordered.

It belongs to the bacterial ribosomal protein bS16 family.

This is Small ribosomal subunit protein bS16 from Mycolicibacterium smegmatis (strain ATCC 700084 / mc(2)155) (Mycobacterium smegmatis).